We begin with the raw amino-acid sequence, 179 residues long: Fimbrial subunit ElfA (179 aa).

A signal peptide spans 1 to 21 (MKKSVLTAFITVVCATSSVMA).

It belongs to the fimbrial protein family.

The protein resides in the fimbrium. Its function is as follows. Part of the elfADCG-ycbUVF fimbrial operon, which promotes adhesion of bacteria to different abiotic surfaces. ElfA is the major fimbrial subunit produced by this operon. The chain is Fimbrial subunit ElfA (elfA) from Escherichia coli (strain K12).